The following is a 565-amino-acid chain: Proline--tRNA ligase (565 aa).

This sequence belongs to the class-II aminoacyl-tRNA synthetase family. ProS type 1 subfamily. As to quaternary structure, homodimer.

It is found in the cytoplasm. The enzyme catalyses tRNA(Pro) + L-proline + ATP = L-prolyl-tRNA(Pro) + AMP + diphosphate. Its function is as follows. Catalyzes the attachment of proline to tRNA(Pro) in a two-step reaction: proline is first activated by ATP to form Pro-AMP and then transferred to the acceptor end of tRNA(Pro). As ProRS can inadvertently accommodate and process non-cognate amino acids such as alanine and cysteine, to avoid such errors it has two additional distinct editing activities against alanine. One activity is designated as 'pretransfer' editing and involves the tRNA(Pro)-independent hydrolysis of activated Ala-AMP. The other activity is designated 'posttransfer' editing and involves deacylation of mischarged Ala-tRNA(Pro). The misacylated Cys-tRNA(Pro) is not edited by ProRS. The protein is Proline--tRNA ligase of Lactobacillus helveticus (strain DPC 4571).